A 644-amino-acid chain; its full sequence is Pentatricopeptide repeat-containing protein At1g12775, mitochondrial (644 aa).

The transit peptide at 1 to 53 directs the protein to the mitochondrion; sequence MVRMMIRRLSSQASRFVQPRLLETGTLRIALINCPNELLFCCERGFSTFSDRN. PPR repeat units follow at residues 87 to 121, 122 to 156, 157 to 191, 192 to 226, 227 to 261, 262 to 296, 297 to 331, 332 to 366, 367 to 401, 402 to 436, 437 to 471, 472 to 506, 507 to 541, 542 to 576, and 577 to 611; these read TVID…GIAH, SIYT…GYEP, DTVI…GHKP, TLIT…GFQP, NEVT…NIKL, DAVK…GFKA, DIIT…KISP, NVVT…GIAP, NTIT…GCDP, DIMT…GVIA, NTVT…RVRP, DIVS…KMEL, DIGI…GVKL, DARA…GHAP, and DELT…GFPA.

Belongs to the PPR family. P subfamily.

The protein resides in the mitochondrion. The protein is Pentatricopeptide repeat-containing protein At1g12775, mitochondrial of Arabidopsis thaliana (Mouse-ear cress).